We begin with the raw amino-acid sequence, 354 residues long: Sulfate/thiosulfate import ATP-binding protein CysA 2 (354 aa).

Residues 3 to 237 (IHIQQVNKHF…PSNPFVYEFL (235 aa)) form the ABC transporter domain. An ATP-binding site is contributed by 35–42 (GPSGSGKT).

Belongs to the ABC transporter superfamily. Sulfate/tungstate importer (TC 3.A.1.6) family. In terms of assembly, the complex is composed of two ATP-binding proteins (CysA), two transmembrane proteins (CysT and CysW) and a solute-binding protein (CysP).

The protein resides in the cell inner membrane. The catalysed reaction is sulfate(out) + ATP + H2O = sulfate(in) + ADP + phosphate + H(+). It catalyses the reaction thiosulfate(out) + ATP + H2O = thiosulfate(in) + ADP + phosphate + H(+). Functionally, part of the ABC transporter complex CysAWTP involved in sulfate/thiosulfate import. Responsible for energy coupling to the transport system. This Shewanella oneidensis (strain ATCC 700550 / JCM 31522 / CIP 106686 / LMG 19005 / NCIMB 14063 / MR-1) protein is Sulfate/thiosulfate import ATP-binding protein CysA 2.